Here is a 487-residue protein sequence, read N- to C-terminus: UDP-glucosyl transferase 73CC6 (487 aa).

His-17 (proton acceptor) is an active-site residue. Asp-114 (charge relay) is an active-site residue. 8 residues coordinate UDP: Ser-282, Trp-346, Ala-347, His-364, Asn-368, Ser-369, Glu-372, and Tyr-386.

The protein belongs to the UDP-glycosyltransferase family. Mainly expressed in flowers and flower buds and, to a lesser extent, in leaves, stems and roots.

The protein operates within secondary metabolite biosynthesis; terpenoid biosynthesis. In terms of biological role, component of the oleanane-type triterpene saponins (e.g. saponarioside A and saponarioside B) biosynthetic pathway, leading to the production of natural products with detergent properties used as traditional sources of soap. A glycosyltransferase that mediates the conversion of QA-di to QA-tri via the elongation of the C-3 sugar chain with a D-xylose. This chain is UDP-glucosyl transferase 73CC6, found in Saponaria officinalis (Common soapwort).